A 260-amino-acid polypeptide reads, in one-letter code: Shikimate dehydrogenase (NADP(+)) (260 aa).

Shikimate is bound by residues 14–16 (SAS) and Thr60. Residue Lys64 is the Proton acceptor of the active site. Positions 85 and 100 each coordinate shikimate. NADP(+) is bound by residues 121–125 (GAGGA), 145–150 (NRTYER), and Phe201. Tyr203 is a shikimate binding site. Gly225 is an NADP(+) binding site.

It belongs to the shikimate dehydrogenase family. As to quaternary structure, homodimer.

It catalyses the reaction shikimate + NADP(+) = 3-dehydroshikimate + NADPH + H(+). It functions in the pathway metabolic intermediate biosynthesis; chorismate biosynthesis; chorismate from D-erythrose 4-phosphate and phosphoenolpyruvate: step 4/7. Its function is as follows. Involved in the biosynthesis of the chorismate, which leads to the biosynthesis of aromatic amino acids. Catalyzes the reversible NADPH linked reduction of 3-dehydroshikimate (DHSA) to yield shikimate (SA). In Pyrobaculum neutrophilum (strain DSM 2338 / JCM 9278 / NBRC 100436 / V24Sta) (Thermoproteus neutrophilus), this protein is Shikimate dehydrogenase (NADP(+)).